The chain runs to 138 residues: Large-conductance mechanosensitive channel (138 aa).

Transmembrane regions (helical) follow at residues 19-39 (VGVIIGGAFGAIVTSLVGDII), 40-60 (MPIIGAITGGLDFSNYFIPLA), and 81-101 (GSFLTLTLNFFIVAFVLFMVI).

Belongs to the MscL family. As to quaternary structure, homopentamer.

Its subcellular location is the cell inner membrane. In terms of biological role, channel that opens in response to stretch forces in the membrane lipid bilayer. May participate in the regulation of osmotic pressure changes within the cell. The chain is Large-conductance mechanosensitive channel from Bradyrhizobium sp. (strain ORS 278).